Consider the following 837-residue polypeptide: Putative outer membrane protein assembly factor TP_0326 (837 aa).

The first 21 residues, 1–21 (MLKKASAFLIASCCVMSLAWA), serve as a signal peptide directing secretion. At 22-433 (QANDNWYEGK…ILNVEEQSTA (412 aa)) the chain is on the periplasmic side. 5 POTRA domains span residues 31 to 105 (KPIS…VKER), 106 to 182 (PSVK…IQEG), 185 to 273 (TVVS…VVEG), 276 to 354 (YRYG…VVER), and 357 to 430 (SHVE…VEEQ). A beta stranded transmembrane segment spans residues 434–442 (NVQFGVTFS). Residues 443 to 450 (GVGEAGTF) lie on the Extracellular; loop L1 side of the membrane. Residues 451 to 461 (PLSLFCQWEEK) traverse the membrane as a beta stranded segment. Residues 462 to 468 (NFLGKGN) are Periplasmic-facing. Residues 469–476 (EISVNATL) form a beta stranded membrane-spanning segment. Topologically, residues 477 to 478 (GS) are extracellular; loop L2. Residues 479-489 (EAQSLKLGYVE) form a beta stranded membrane-spanning segment. Residues 490–499 (RWFLGSPLTV) lie on the Periplasmic side of the membrane. A beta stranded membrane pass occupies residues 500-520 (GFDFELTHKNLFVYRAGSYGN). Topologically, residues 521 to 530 (GLPHPYTSRE) are extracellular; loop L3. The beta stranded transmembrane segment at 531–543 (QWASSPGLAESFR) threads the bilayer. Over 544-554 (LKYSRFESAIG) the chain is Periplasmic. The chain crosses the membrane as a beta stranded span at residues 555-568 (AHTGYQWYPRYAVI). Over 569-601 (RVNGGVDFRVVKNFYDKDNNQPFDLTVKEQLNW) the chain is Extracellular; loop L4. The beta stranded transmembrane segment at 602–615 (TSINSFWTSVSFDG) threads the bilayer. Topologically, residues 616-623 (RDFAYDPS) are periplasmic. The beta stranded transmembrane segment at 624-636 (SGWFLGQRCTFNG) threads the bilayer. Topologically, residues 637-644 (LVPFLEKE) are extracellular; loop L5. A beta stranded membrane pass occupies residues 645-658 (HSFRSDTKAEFYVT). Residues 659–667 (LLNYPVSAV) lie on the Periplasmic side of the membrane. A beta stranded transmembrane segment spans residues 668-682 (WNLKFVLAFYTGVSV). Topologically, residues 683–724 (QTYYGRRKSENGKGNGVRSGALVIDGVLVGRGWSEDAKKNTG) are extracellular; loop L6. The chain crosses the membrane as a beta stranded span at residues 725–736 (DLLLHHWIEFRW). Residues 737–741 (PLAHG) lie on the Periplasmic side of the membrane. The beta stranded transmembrane segment at 742–756 (IVSFDFFFDAAMVYN) threads the bilayer. The Extracellular; loop L7 segment spans residues 757–786 (IESQSPNGSSSASSSSSSSSSSSRTTSSEG). The disordered stretch occupies residues 761-785 (SPNGSSSASSSSSSSSSSSRTTSSE). Residues 765-784 (SSSASSSSSSSSSSSRTTSS) are compositionally biased toward low complexity. A beta stranded transmembrane segment spans residues 787–799 (LYKMSYGPGLRFT). The Periplasmic segment spans residues 800 to 802 (LPQ). A beta stranded membrane pass occupies residues 803-814 (FPLKLAFANTFT). The Extracellular; loop L8 portion of the chain corresponds to 815-824 (SPGGIPKTKK). A beta stranded membrane pass occupies residues 825–829 (NWNFV). The Periplasmic segment spans residues 830 to 837 (LSFTVNNL).

The protein belongs to the BamA family. In terms of assembly, part of 2 complexes of about 239 and 164 kDa.

It localises to the cell outer membrane. Functionally, might be part of the outer membrane protein assembly complex, which is involved in assembly and insertion of beta-barrel proteins into the outer membrane. In terms of biological role, both rabbit immune serum and rabbit antiserum specific for extracytoplasmic loop L4 promote bacteria internalization by rabbit peritoneal macrophages. Pools of human syphilitic sera from the USA and Columbia recognize both the N-terminal POTRA-containing and C-terminal beta-barrel domains as well as loop L4, showing this protein stimulates the immune system in both humans and rabbits. This Treponema pallidum (strain Nichols) protein is Putative outer membrane protein assembly factor TP_0326 (tp92).